Here is a 459-residue protein sequence, read N- to C-terminus: Argininosuccinate lyase (459 aa).

Belongs to the lyase 1 family. Argininosuccinate lyase subfamily.

The protein resides in the cytoplasm. The enzyme catalyses 2-(N(omega)-L-arginino)succinate = fumarate + L-arginine. It functions in the pathway amino-acid biosynthesis; L-arginine biosynthesis; L-arginine from L-ornithine and carbamoyl phosphate: step 3/3. This chain is Argininosuccinate lyase, found in Staphylococcus aureus (strain bovine RF122 / ET3-1).